Reading from the N-terminus, the 317-residue chain is Porphobilinogen deaminase (317 aa).

At Cys-245 the chain carries S-(dipyrrolylmethanemethyl)cysteine.

This sequence belongs to the HMBS family. In terms of assembly, monomer. Dipyrromethane is required as a cofactor.

It carries out the reaction 4 porphobilinogen + H2O = hydroxymethylbilane + 4 NH4(+). It participates in porphyrin-containing compound metabolism; protoporphyrin-IX biosynthesis; coproporphyrinogen-III from 5-aminolevulinate: step 2/4. It functions in the pathway porphyrin-containing compound metabolism; chlorophyll biosynthesis. Functionally, tetrapolymerization of the monopyrrole PBG into the hydroxymethylbilane pre-uroporphyrinogen in several discrete steps. This Parasynechococcus marenigrum (strain WH8102) protein is Porphobilinogen deaminase.